Here is a 360-residue protein sequence, read N- to C-terminus: Histidinol-phosphate aminotransferase (360 aa).

The residue at position 223 (K223) is an N6-(pyridoxal phosphate)lysine.

It belongs to the class-II pyridoxal-phosphate-dependent aminotransferase family. Histidinol-phosphate aminotransferase subfamily. In terms of assembly, homodimer. Pyridoxal 5'-phosphate serves as cofactor.

The enzyme catalyses L-histidinol phosphate + 2-oxoglutarate = 3-(imidazol-4-yl)-2-oxopropyl phosphate + L-glutamate. It participates in amino-acid biosynthesis; L-histidine biosynthesis; L-histidine from 5-phospho-alpha-D-ribose 1-diphosphate: step 7/9. In Bacillus subtilis (strain 168), this protein is Histidinol-phosphate aminotransferase (hisC).